Consider the following 462-residue polypeptide: Protein Tube (462 aa).

One can recognise a Death domain in the interval 27–152; it reads YSRNTELRRV…SAADFVALDF (126 aa). The interval 218 to 265 is disordered; sequence RDKSVPQPSGNTPPIAPPRRQQRSTTNSNFATLTGTGTTSTTIPNVPN. Residues 249 to 259 show a composition bias toward low complexity; it reads TLTGTGTTSTT. 2 consecutive repeat copies span residues 262–269 and 286–293. Positions 262 to 460 are 5 X approximate repeats; sequence NVPNLTILNP…ACNIPDLSEL (199 aa). Over residues 301 to 317 the composition is skewed to polar residues; sequence RATVSDNPSNRTSSTDP. The disordered stretch occupies residues 301-462; sequence RATVSDNPSN…NIPDLSELQQ (162 aa). Repeat unit 3 spans residues 319-326; it reads NIPRITLL. Residues 342 to 354 are compositionally biased toward low complexity; that stretch reads AKASTATTSTASS. The span at 355–367 shows a compositional bias: polar residues; the sequence is NNLPMISALNISK. The stretch at 356–363 is repeat 4; that stretch reads NLPMISAL. A compositionally biased stretch (basic and acidic residues) spans 368–377; it reads GSRETLRPES. The segment covering 387–403 has biased composition (acidic residues); that stretch reads DDDDDNDGEEDGEEEYP. Over residues 409-424 the composition is skewed to low complexity; the sequence is NLSNSEQQSSNNDSSL. Polar residues predominate over residues 425–438; sequence TTVTGTSGDNSFEL. Positions 439-449 are enriched in low complexity; it reads TNDSSSTSNDD. The stretch at 453 to 460 is repeat 5; the sequence is NIPDLSEL.

In terms of assembly, interacts (via Death domain) with pll (via Death domain). Post-translationally, phosphorylated by pll.

The protein localises to the cytoplasm. Its subcellular location is the cell membrane. Plays an essential role in the Tl receptor signaling pathway that establishes embryonic dorsoventral polarity; the signal directs import of dl into ventral and ventrolateral nuclei, thereby establishing dorsoventral polarity. Tub recruits pll to the plasma membrane and protein-protein interaction activates pll. Also has a role in pupal pattern formation. This Drosophila melanogaster (Fruit fly) protein is Protein Tube (tub).